Consider the following 369-residue polypeptide: Anhydro-N-acetylmuramic acid kinase (369 aa).

ATP is bound at residue Gly12–Asp19.

Belongs to the anhydro-N-acetylmuramic acid kinase family.

The catalysed reaction is 1,6-anhydro-N-acetyl-beta-muramate + ATP + H2O = N-acetyl-D-muramate 6-phosphate + ADP + H(+). It functions in the pathway amino-sugar metabolism; 1,6-anhydro-N-acetylmuramate degradation. Its pathway is cell wall biogenesis; peptidoglycan recycling. In terms of biological role, catalyzes the specific phosphorylation of 1,6-anhydro-N-acetylmuramic acid (anhMurNAc) with the simultaneous cleavage of the 1,6-anhydro ring, generating MurNAc-6-P. Is required for the utilization of anhMurNAc either imported from the medium or derived from its own cell wall murein, and thus plays a role in cell wall recycling. This is Anhydro-N-acetylmuramic acid kinase from Escherichia coli (strain SE11).